A 509-amino-acid chain; its full sequence is Bifunctional purine biosynthesis protein PurH (509 aa).

An MGS-like domain is found at 1–144 (MKRALISVSD…KNYAAVTVVV (144 aa)).

Belongs to the PurH family.

It catalyses the reaction (6R)-10-formyltetrahydrofolate + 5-amino-1-(5-phospho-beta-D-ribosyl)imidazole-4-carboxamide = 5-formamido-1-(5-phospho-D-ribosyl)imidazole-4-carboxamide + (6S)-5,6,7,8-tetrahydrofolate. The catalysed reaction is IMP + H2O = 5-formamido-1-(5-phospho-D-ribosyl)imidazole-4-carboxamide. It participates in purine metabolism; IMP biosynthesis via de novo pathway; 5-formamido-1-(5-phospho-D-ribosyl)imidazole-4-carboxamide from 5-amino-1-(5-phospho-D-ribosyl)imidazole-4-carboxamide (10-formyl THF route): step 1/1. It functions in the pathway purine metabolism; IMP biosynthesis via de novo pathway; IMP from 5-formamido-1-(5-phospho-D-ribosyl)imidazole-4-carboxamide: step 1/1. The sequence is that of Bifunctional purine biosynthesis protein PurH from Listeria innocua serovar 6a (strain ATCC BAA-680 / CLIP 11262).